The following is a 217-amino-acid chain: Superoxide dismutase [Cu-Zn], chloroplastic (217 aa).

The transit peptide at 1–63 (MAAHSIFTTT…TTPKPLTVFA (63 aa)) directs the protein to the chloroplast. His109, His111, and His126 together coordinate Cu cation. Residues Cys120 and Cys209 are joined by a disulfide bond. Positions 126, 134, 143, and 146 each coordinate Zn(2+). His183 contributes to the Cu cation binding site.

This sequence belongs to the Cu-Zn superoxide dismutase family. Homotetramer. The cofactor is Cu cation. Zn(2+) serves as cofactor.

The protein localises to the plastid. It is found in the chloroplast. It carries out the reaction 2 superoxide + 2 H(+) = H2O2 + O2. In terms of biological role, destroys radicals which are normally produced within the cells and which are toxic to biological systems. In Solanum lycopersicum (Tomato), this protein is Superoxide dismutase [Cu-Zn], chloroplastic (SODCP.2).